A 170-amino-acid polypeptide reads, in one-letter code: Small ribosomal subunit protein uS3mB (170 aa).

A mitochondrion-targeting transit peptide spans 1 to 30 (MAAPVMSAFGRLQGLIRTERSLLTHVQSRC).

This sequence belongs to the universal ribosomal protein uS3 family. In terms of assembly, component of the mitochondrial ribosome small subunit (28S) which comprises a 12S rRNA and about 30 distinct proteins.

The protein localises to the mitochondrion. The sequence is that of Small ribosomal subunit protein uS3mB (mrps24-b) from Xenopus laevis (African clawed frog).